Consider the following 560-residue polypeptide: Protein yellow (560 aa).

Residues Met-1–Ala-30 form the signal peptide. Asn-153 and Asn-224 each carry an N-linked (GlcNAc...) asparagine glycan. Positions Gln-452–Val-492 are disordered. Low complexity predominate over residues Ser-471 to Ala-480.

Belongs to the major royal jelly protein family.

It is found in the secreted. Its function is as follows. Controls the pigmentation pattern of the adult cuticle and larval mouth parts. In Drosophila pseudoobscura pseudoobscura (Fruit fly), this protein is Protein yellow (y).